The following is a 296-amino-acid chain: Lipoyl synthase (296 aa).

Positions 37, 42, 48, 63, 67, 70, and 276 each coordinate [4Fe-4S] cluster. The Radical SAM core domain occupies 49–265 (WSKKHTTVMI…ERVAKTKGFL (217 aa)).

Belongs to the radical SAM superfamily. Lipoyl synthase family. Requires [4Fe-4S] cluster as cofactor.

It is found in the cytoplasm. It carries out the reaction [[Fe-S] cluster scaffold protein carrying a second [4Fe-4S](2+) cluster] + N(6)-octanoyl-L-lysyl-[protein] + 2 oxidized [2Fe-2S]-[ferredoxin] + 2 S-adenosyl-L-methionine + 4 H(+) = [[Fe-S] cluster scaffold protein] + N(6)-[(R)-dihydrolipoyl]-L-lysyl-[protein] + 4 Fe(3+) + 2 hydrogen sulfide + 2 5'-deoxyadenosine + 2 L-methionine + 2 reduced [2Fe-2S]-[ferredoxin]. Its pathway is protein modification; protein lipoylation via endogenous pathway; protein N(6)-(lipoyl)lysine from octanoyl-[acyl-carrier-protein]: step 2/2. Its function is as follows. Catalyzes the radical-mediated insertion of two sulfur atoms into the C-6 and C-8 positions of the octanoyl moiety bound to the lipoyl domains of lipoate-dependent enzymes, thereby converting the octanoylated domains into lipoylated derivatives. The polypeptide is Lipoyl synthase (Rickettsia peacockii (strain Rustic)).